Consider the following 461-residue polypeptide: Ribonuclease inhibitor (461 aa).

Residue Ser-2 is modified to N-acetylserine. Residues 2–11 are 2 X 5 AA tandem repeats of S-L-D-I-Q; sequence SLDIQSLDIQ. 15 LRR repeats span residues 20-48, 49-76, 77-105, 106-133, 134-162, 163-190, 191-219, 220-247, 248-276, 277-304, 305-333, 334-361, 362-390, 391-418, and 419-447; these read WAEL…CKDI, SSAL…VHCV, LQGL…CGVL, SSTL…LQLL, CEGL…CEPL, ASVL…VRVL, CQGL…CRDL, CGIV…MAEL, CPGL…CGDL, CRVL…ARLL, CETL…CSHF, SSVL…VREL, CQGL…CSSL, AATL…ILQL, and VESV…EDRL. Thr-82 carries the post-translational modification Phosphothreonine. Ser-91 carries the phosphoserine modification.

As to quaternary structure, forms high-affinity heterodimers with RNASE1, ANG and RNASE2. In terms of processing, the N-terminus is blocked. At least 30 of the 32 cysteine residues are in the reduced form.

The protein resides in the cytoplasm. It is found in the nucleus. Its function is as follows. Ribonuclease inhibitor which inhibits RNASE1, RNASE2 and angiogenin (ANG). May play a role in redox homeostasis. Required to inhibit the cytotoxic tRNA ribonuclease activity of ANG in the cytoplasm in absence of stress. Relocates to the nucleus in response to stress, relieving inhibition of ANG in the cytoplasm, and inhibiting the angiogenic activity of ANG in the nucleus. In Homo sapiens (Human), this protein is Ribonuclease inhibitor.